We begin with the raw amino-acid sequence, 419 residues long: Serine hydroxymethyltransferase (419 aa).

Residues leucine 121 and 125 to 127 (GHL) each bind (6S)-5,6,7,8-tetrahydrofolate. At lysine 230 the chain carries N6-(pyridoxal phosphate)lysine. Residue 355–357 (SPF) coordinates (6S)-5,6,7,8-tetrahydrofolate.

It belongs to the SHMT family. As to quaternary structure, homodimer. Pyridoxal 5'-phosphate serves as cofactor.

It localises to the cytoplasm. The catalysed reaction is (6R)-5,10-methylene-5,6,7,8-tetrahydrofolate + glycine + H2O = (6S)-5,6,7,8-tetrahydrofolate + L-serine. It functions in the pathway one-carbon metabolism; tetrahydrofolate interconversion. It participates in amino-acid biosynthesis; glycine biosynthesis; glycine from L-serine: step 1/1. Its function is as follows. Catalyzes the reversible interconversion of serine and glycine with tetrahydrofolate (THF) serving as the one-carbon carrier. This reaction serves as the major source of one-carbon groups required for the biosynthesis of purines, thymidylate, methionine, and other important biomolecules. Also exhibits THF-independent aldolase activity toward beta-hydroxyamino acids, producing glycine and aldehydes, via a retro-aldol mechanism. The chain is Serine hydroxymethyltransferase from Streptococcus equi subsp. equi (strain 4047).